We begin with the raw amino-acid sequence, 264 residues long: MDNRPIGFLDSGVGGLTVVRELMRQLPHESIVYVGDSARAPYGPRPADQIREFTWELVNFLLTKNVKMIVFACNTATAVAWEEVKNALSIPVLGVILPGSSAAIKSTTSGKVGVIGTPMTIQSDIYRQKIQLLAPQIEVLSLACPKFVPIVESNETKSSVAKKIVYETLEPLVGKVDTLVLGCTHYPLLRPIIQNVMGSEVTLIDSGAECIRDISVLLNYFQINASREEKKADNLFFTTAGTDTFKEIANAWLEESIDVEHTDL.

Substrate is bound by residues 10–11 and 42–43; these read DS and YG. Cysteine 73 (proton donor/acceptor) is an active-site residue. 74–75 contacts substrate; the sequence is NT. Residue cysteine 183 is the Proton donor/acceptor of the active site. 184 to 185 serves as a coordination point for substrate; that stretch reads TH.

It belongs to the aspartate/glutamate racemases family.

It catalyses the reaction L-glutamate = D-glutamate. The protein operates within cell wall biogenesis; peptidoglycan biosynthesis. In terms of biological role, provides the (R)-glutamate required for cell wall biosynthesis. The protein is Glutamate racemase of Streptococcus uberis (strain ATCC BAA-854 / 0140J).